Here is a 190-residue protein sequence, read N- to C-terminus: Adenine phosphoribosyltransferase (190 aa).

The protein belongs to the purine/pyrimidine phosphoribosyltransferase family. In terms of assembly, homodimer.

It is found in the cytoplasm. The enzyme catalyses AMP + diphosphate = 5-phospho-alpha-D-ribose 1-diphosphate + adenine. It functions in the pathway purine metabolism; AMP biosynthesis via salvage pathway; AMP from adenine: step 1/1. Its function is as follows. Catalyzes a salvage reaction resulting in the formation of AMP, that is energically less costly than de novo synthesis. The protein is Adenine phosphoribosyltransferase of Cupriavidus taiwanensis (strain DSM 17343 / BCRC 17206 / CCUG 44338 / CIP 107171 / LMG 19424 / R1) (Ralstonia taiwanensis (strain LMG 19424)).